The following is a 271-amino-acid chain: Thiazole synthase (271 aa).

Lys-104 functions as the Schiff-base intermediate with DXP in the catalytic mechanism. 1-deoxy-D-xylulose 5-phosphate contacts are provided by residues Gly-165, 192 to 193 (AG), and 214 to 215 (NT).

This sequence belongs to the ThiG family. As to quaternary structure, homotetramer. Forms heterodimers with either ThiH or ThiS.

Its subcellular location is the cytoplasm. It catalyses the reaction [ThiS sulfur-carrier protein]-C-terminal-Gly-aminoethanethioate + 2-iminoacetate + 1-deoxy-D-xylulose 5-phosphate = [ThiS sulfur-carrier protein]-C-terminal Gly-Gly + 2-[(2R,5Z)-2-carboxy-4-methylthiazol-5(2H)-ylidene]ethyl phosphate + 2 H2O + H(+). It functions in the pathway cofactor biosynthesis; thiamine diphosphate biosynthesis. In terms of biological role, catalyzes the rearrangement of 1-deoxy-D-xylulose 5-phosphate (DXP) to produce the thiazole phosphate moiety of thiamine. Sulfur is provided by the thiocarboxylate moiety of the carrier protein ThiS. In vitro, sulfur can be provided by H(2)S. The chain is Thiazole synthase from Burkholderia mallei (strain ATCC 23344).